Reading from the N-terminus, the 100-residue chain is MFCSRAVVLLNNALKIAVMKNGDLSLIQLGLDKEKREITESVIAIYQSELNLLSDVVNLLVKRAVFHKQISSVDELTKLTTEIASYCADEFKKLNDKRNW.

This is an uncharacterized protein from Escherichia phage P2 (Bacteriophage P2).